A 137-amino-acid chain; its full sequence is Leaf-specific thionin (137 aa).

Residues 1-28 form the signal peptide; the sequence is MATNKSIKSVVICVLILGLVLEQVQVEA. 4 disulfides stabilise this stretch: C31-C68, C32-C60, C40-C58, and C44-C54. Residues 75 to 137 constitute a propeptide, acidic domain; it reads LNLLPESGEP…DGEVIQSVEA (63 aa).

This sequence belongs to the plant thionin (TC 1.C.44) family. 4 C-C subfamily.

The protein localises to the secreted. Functionally, thionins are small plant proteins which are toxic to animal cells. They seem to exert their toxic effect at the level of the cell membrane. Their precise function is not known. This is Leaf-specific thionin (THI1.5) from Hordeum vulgare (Barley).